The sequence spans 685 residues: DNA topoisomerase 4 subunit B (685 aa).

Residues 389 to 400 (EAARKAREESRN) show a composition bias toward basic and acidic residues. The tract at residues 389-427 (EAARKAREESRNGKKRKKGESLLSGKLTPAQSRNPKKNE) is disordered. One can recognise a Toprim domain in the interval 426-540 (NELYLVEGDS…AGKVYIALPP (115 aa)). 3 residues coordinate Mg(2+): Glu432, Asp505, and Asp507. 2 stretches are compositionally biased toward acidic residues: residues 644–654 (GSILDRSEEDT) and 673–685 (QTDDTEISLFDIE). Positions 644 to 685 (GSILDRSEEDTSAPTGESLLDAEKTKEAEQTDDTEISLFDIE) are disordered.

The protein belongs to the type II topoisomerase family. ParE type 1 subfamily. As to quaternary structure, heterotetramer composed of ParC and ParE. The cofactor is Mg(2+). Mn(2+) is required as a cofactor. Ca(2+) serves as cofactor.

The enzyme catalyses ATP-dependent breakage, passage and rejoining of double-stranded DNA.. Its activity is regulated as follows. Pyrrolopyrimidines inhibit both GyrB and its paralog in topoisomerase IV (parE). In terms of biological role, topoisomerase IV is essential for chromosome segregation. It relaxes supercoiled DNA. Performs the decatenation events required during the replication of a circular DNA molecule. This chain is DNA topoisomerase 4 subunit B, found in Enterococcus faecalis (strain ATCC 700802 / V583).